A 674-amino-acid chain; its full sequence is MRKILVTNALPYANGDLHLGHMLGYIQSDIWVRFQKLQGNQCIFVCGSDTHGTPIMLKAKSLGITPEELVTKYSNRHLQDFTDFEINFDNYHSTHNSLNKEIVEDIYNKLNNKNLISKKAIAQAYDPEAKMFLPDRFVKGTCPKCKAEDQYGDSCEVCGATYDPTELINPRSVISGQSPIQKNSEHFFFDLPALEKNIKDWIESNTLLQPEVANKLAEWFEQGLQSWDISRDAPYFGFAIPGTNEQKFFYVWLDAPMGYIASFKDYCNKNNINFGDFWGDSSSESELYHFIGKDIIYFHALFWPAILSSTGYKTPTSVFANGFLTVNGKKMSKSRGTFIQARTYLDNLEPSYLRYYFASRLTSRIDDIDLNLEEFVTKSNSDIVGKVVNIASRCAGFIYKKFDATLSGEIFDPELESEFSKNHDAITQAFEKREFAHAVRLIMALADKANQFIDYHKPWQLAKEEGQEQKVHQVCSQGINMFKVLIAYLKPIIPSIVAEAERFLNIQFISWADAPKFLINHKIDKFKPLATRIEKEKVDKILEDTKKMFENEQAPQSKKEEPKLDIAAECTFDDFMKVDLRIAKITEASHVEGADKLLKLILDLGGVTKQVFAGIKSAYKPEDLIGKHTIMVANLAPRKMKFGMSEGMVLAAGDGKGIYILEPHEGAQPGMRVK.

A 'HIGH' region motif is present at residues 11-21; that stretch reads PYANGDLHLGH. Cys-142, Cys-145, Cys-155, and Cys-158 together coordinate Zn(2+). The short motif at 330–334 is the 'KMSKS' region element; it reads KMSKS. Residue Lys-333 participates in ATP binding. One can recognise a tRNA-binding domain in the interval 574–674; it reads DFMKVDLRIA…EGAQPGMRVK (101 aa).

It belongs to the class-I aminoacyl-tRNA synthetase family. MetG type 1 subfamily. As to quaternary structure, homodimer. Zn(2+) is required as a cofactor.

It is found in the cytoplasm. It carries out the reaction tRNA(Met) + L-methionine + ATP = L-methionyl-tRNA(Met) + AMP + diphosphate. In terms of biological role, is required not only for elongation of protein synthesis but also for the initiation of all mRNA translation through initiator tRNA(fMet) aminoacylation. This is Methionine--tRNA ligase from Francisella tularensis subsp. holarctica (strain FTNF002-00 / FTA).